We begin with the raw amino-acid sequence, 359 residues long: S-adenosylmethionine-dependent nucleotide dehydratase RSAD2 (359 aa).

Positions 43–67 (QTPARKISRPESRTSKQKEGSRAPF) are disordered. A compositionally biased stretch (basic and acidic residues) spans 50–63 (SRPESRTSKQKEGS). Residues 67-287 (FTTPSSVNYH…LERHQSIQCL (221 aa)) form the Radical SAM core domain. Cysteine 81, cysteine 85, and cysteine 88 together coordinate [4Fe-4S] cluster.

The protein belongs to the radical SAM superfamily. RSAD2 family. [4Fe-4S] cluster serves as cofactor.

It localises to the endoplasmic reticulum membrane. Interferon-inducible iron-sulfur (4FE-4S) cluster-binding antiviral protein which plays a major role in the cell antiviral state induced by type I and type II interferon. The chain is S-adenosylmethionine-dependent nucleotide dehydratase RSAD2 from Danio rerio (Zebrafish).